Reading from the N-terminus, the 833-residue chain is Serine/threonine-protein phosphatase 4 regulatory subunit 3A (833 aa).

Positions 1 to 100 (MTDTRRRVKV…DEIWEKICQV (100 aa)) constitute a WH1 domain. S117 and S127 each carry phosphoserine. K655 is modified (N6-acetyllysine). A compositionally biased stretch (acidic residues) spans 683 to 694 (FNTDEDDMEDGE). Disordered regions lie at residues 683 to 712 (FNTDEDDMEDGEAVVSPSDKTKNDDDIMDP) and 733 to 833 (KTNL…KFDS). Phosphoserine occurs at positions 698, 741, 768, 771, 774, 777, and 780. Over residues 734–751 (TNLSGRQSPSFKLSLSSG) the composition is skewed to polar residues. Positions 752 to 768 (TKTNLTSQSSTTNLPGS) are enriched in low complexity. Positions 785 to 794 (PKNTSQTAAI) are enriched in polar residues. Residues 806-820 (YPDDDEDDDEDEDKE) show a composition bias toward acidic residues.

Belongs to the SMEK family. In terms of assembly, serine/threonine-protein phosphatase 4 (PP4) occurs in different assemblies of the catalytic and one or more regulatory subunits. Component of the PP4 complex PPP4C-PPP4R2-PPP4R3A. Interacts with PPP4C; the interaction requires PPP4R2.

Its subcellular location is the cytoplasm. The protein resides in the cytoskeleton. It localises to the microtubule organizing center. The protein localises to the centrosome. It is found in the nucleus. Its function is as follows. Regulatory subunit of serine/threonine-protein phosphatase 4. May regulate the activity of PPP4C at centrosomal microtubule organizing centers. The PPP4C-PPP4R2-PPP4R3A PP4 complex specifically dephosphorylates H2AX phosphorylated on 'Ser-140' (gamma-H2AX) generated during DNA replication and required for DNA DSB repair. This Homo sapiens (Human) protein is Serine/threonine-protein phosphatase 4 regulatory subunit 3A.